A 71-amino-acid polypeptide reads, in one-letter code: uncharacterized protein (71 aa).

A signal peptide spans 1-19; the sequence is MFLFPSLLSSFCITLRSIS.

This is an uncharacterized protein from Pasteurella multocida (strain Pm70).